Here is a 358-residue protein sequence, read N- to C-terminus: MENARLIEADAVVIGAGPVGLFQVFQLGLQGIAAHVVDALPHVGGQCAELYADKPIYDIPGVPVCTGRELVALLNRQIAPFSPQLHLSQRVETLQPAPDGGFLFATDAGAALHARTVFIAAGVGAFVPRTLKIDGIERFHGTQVFHHEEPAPTRGRQVVVLGGEDTAVARAIACAEPGPEAAASVTLVHRRDAFQAAPQDLARLQALRDSGRIRVLAAQVTGIEAAAQAGTPEPGRLTGVRLLASDGTEQGLPLDTLLLCLGVSPRLGPVADWGLALERKQVKVDTATFSAGVPGLYAVGDINTYPGKRKLILCGFHEATLAAFAAAEHLAGSPVALQYTTTSTRLKERLGVAGAGTP.

7 residues coordinate FAD: D38, Q46, Y51, V91, F126, D301, and T341.

Belongs to the ferredoxin--NADP reductase type 2 family. Homodimer. FAD is required as a cofactor.

The enzyme catalyses 2 reduced [2Fe-2S]-[ferredoxin] + NADP(+) + H(+) = 2 oxidized [2Fe-2S]-[ferredoxin] + NADPH. The protein is Ferredoxin--NADP reductase of Paracidovorax citrulli (strain AAC00-1) (Acidovorax citrulli).